Here is a 242-residue protein sequence, read N- to C-terminus: Protein unc-119 homolog B-A (242 aa).

Basic and acidic residues predominate over residues 1 to 20 (MSGSKREAALTGQPKDERKK). The segment at 1–49 (MSGSKREAALTGQPKDERKKSGGGVINRLKARRVQGKESGTSDQSSVTP) is disordered. Over residues 38–48 (ESGTSDQSSVT) the composition is skewed to polar residues. Residue Tyr133 participates in tetradecanoate binding.

It belongs to the PDE6D/unc-119 family.

Its function is as follows. Myristoyl-binding protein that acts as a cargo adapter: specifically binds the myristoyl moiety of a subset of N-terminally myristoylated proteins and is required for their localization. Plays a key role in localization of proteins to the primary cilium membrane. This is Protein unc-119 homolog B-A (unc119b-a) from Xenopus laevis (African clawed frog).